The following is a 441-amino-acid chain: Putative cytochrome P450 138 (441 aa).

A heme-binding site is contributed by Cys-388.

The protein belongs to the cytochrome P450 family. Heme is required as a cofactor.

The protein is Putative cytochrome P450 138 (cyp138) of Mycobacterium bovis (strain ATCC BAA-935 / AF2122/97).